A 1352-amino-acid polypeptide reads, in one-letter code: Spike glycoprotein (1352 aa).

The first 12 residues, 1-12 (MIRSVLVLMCSL), serve as a signal peptide directing secretion. The Extracellular segment spans residues 13–1297 (TFIGNLTRGQ…GNYTFYQKWP (1285 aa)). Positions 22–359 (QSVDMGHNGT…DDLAQLQCSY (338 aa)) constitute a BetaCoV S1-NTD domain. N-linked (GlcNAc...) asparagine; by host glycans are attached at residues Asn-29, Asn-73, Asn-111, Asn-132, Asn-167, Asn-174, Asn-244, and Asn-250. Cys-193 and Cys-245 form a disulfide bridge. Cystine bridges form between Cys-347-Cys-357 and Cys-391-Cys-415. In terms of domain architecture, BetaCoV S1-CTD spans 389 to 585 (QECDFTPMLT…GTDTNSVCPM (197 aa)). The N-linked (GlcNAc...) asparagine; by host glycan is linked to Asn-418. 2 disulfides stabilise this stretch: Cys-433–Cys-486 and Cys-445–Cys-583. N-linked (GlcNAc...) asparagine; by host glycosylation is found at Asn-495, Asn-590, Asn-617, Asn-716, Asn-760, Asn-771, Asn-782, and Asn-867. Fusion peptide stretches follow at residues 885–906 (STIE…MQGY) and 904–926 (QGYD…AQYV). Cys-909 and Cys-922 are joined by a disulfide. Residues 991 to 1041 (QKIIANKFNQALGAMQTGFTTTNLAFNKVQDAVNANAMALSKLAAELSNTF) form a heptad repeat 1 region. Positions 1020–1064 (QDAVNANAMALSKLAAELSNTFGAISSSISDILARLDTVEQEAQI) form a coiled coil. N-linked (GlcNAc...) asparagine; by host glycosylation is found at Asn-1145, Asn-1172, Asn-1214, Asn-1226, Asn-1242, Asn-1257, Asn-1278, and Asn-1289. The tract at residues 1247-1286 (GPNFQEISKINTTLLNLNTELMVLSEVVKQLNESYIDLKE) is heptad repeat 2. The stretch at 1259–1287 (TLLNLNTELMVLSEVVKQLNESYIDLKEL) forms a coiled coil. Residues 1298-1318 (WYIWLGFIAGLVALALCVFFI) form a helical membrane-spanning segment. The Cytoplasmic portion of the chain corresponds to 1319–1352 (LCCTGCGTSCLGKLKCNRCCDSYDEYEVEKIHVH). The KxHxx motif lies at 1350 to 1352 (HVH).

It belongs to the betacoronaviruses spike protein family. Homotrimer; each monomer consists of a S1 and a S2 subunit. The resulting peplomers protrude from the virus surface as spikes. Specific enzymatic cleavages in vivo yield mature proteins. The precursor is processed into S1 and S2 by host cell furin or another cellular protease to yield the mature S1 and S2 proteins. Additionally, a second cleavage leads to the release of a fusion peptide after viral attachment to host cell receptor. In terms of processing, the cytoplasmic Cys-rich domain is palmitoylated. Spike glycoprotein is digested within host endosomes.

It is found in the virion membrane. The protein localises to the host endoplasmic reticulum-Golgi intermediate compartment membrane. The protein resides in the host cell membrane. Attaches the virion to the cell membrane by interacting with host receptor, initiating the infection. Its function is as follows. Mediates fusion of the virion and cellular membranes by acting as a class I viral fusion protein. Under the current model, the protein has at least three conformational states: pre-fusion native state, pre-hairpin intermediate state, and post-fusion hairpin state. During viral and target cell membrane fusion, the coiled coil regions (heptad repeats) assume a trimer-of-hairpins structure, positioning the fusion peptide in close proximity to the C-terminal region of the ectodomain. The formation of this structure appears to drive apposition and subsequent fusion of viral and target cell membranes. Functionally, acts as a viral fusion peptide which is unmasked following S2 cleavage occurring upon virus endocytosis. This chain is Spike glycoprotein, found in Bat coronavirus HKU5 (BtCoV).